The chain runs to 300 residues: Free fatty acid receptor 1 (300 aa).

Residues 1-8 (MDLPPQLS) are Extracellular-facing. A helical membrane pass occupies residues 9-31 (FALYVSAFALGFPLNLLAIRGAV). Topologically, residues 32–41 (SHAKLRLTPS) are cytoplasmic. Residues 42–64 (LVYTLHLGCSDLLLAITLPLKAV) traverse the membrane as a helical segment. At 65–79 (EALASGAWPLPLPFC) the chain is on the extracellular side. A disulfide bridge connects residues Cys79 and Cys170. A helical membrane pass occupies residues 80 to 101 (PVFALAHFAPLYAGGGFLAALS). Topologically, residues 102-121 (AGRYLGAAFPFGYQAIRRPR) are cytoplasmic. A helical membrane pass occupies residues 122–142 (YSWGVCVAIWALVLCHLGLAL). Over 143–178 (GLETSGSWLDNSTSSLGINIPVNGSPVCLEAWDPDS) the chain is Extracellular. Asn153 is a glycosylation site (N-linked (GlcNAc...) asparagine). A helical transmembrane segment spans residues 179 to 200 (ARPARLSFSILLFFLPLVITAF). Over 201-223 (CYVGCLRALVRSGLSHKRKLRAA) the chain is Cytoplasmic. A helical membrane pass occupies residues 224–248 (WVAGGALLTLLLCLGPYNASNVASF). Residues 249 to 256 (INPDLGGS) are Extracellular-facing. Residues 257–279 (WRKLGLITGAWSVVLNPLVTGYL) traverse the membrane as a helical segment. The Cytoplasmic segment spans residues 280–300 (GTGPGRGTICVTRTQRGTIQK).

Belongs to the G-protein coupled receptor 1 family. Expressed in pancreatic islet beta cells (at protein level). Expressed in pancreatic islet beta cells.

It localises to the cell membrane. Its activity is regulated as follows. Is also activated by synthetic agonists, such as AM-8182, AM-6331 and TAK-875 (fasiglifam). AM-8182 is a full agonist, while AM-6331 and TAK-875 (fasiglifam) are partial agonists that potentiate the activity of the endogenous ligands, such as alpha-linolenic acid and gamma-linolenic acid. Functionally, G-protein coupled receptor for medium and long chain saturated and unsaturated fatty acids that plays an important role in glucose homeostasis. Fatty acid binding increases glucose-stimulated insulin secretion, and may also enhance the secretion of glucagon-like peptide 1 (GLP-1). May also play a role in bone homeostasis; receptor signaling activates pathways that inhibit osteoclast differentiation. Ligand binding leads to a conformation change that triggers signaling via G-proteins that activate phospholipase C, leading to an increase of the intracellular calcium concentration. Seems to act through a G(q) and G(i)-mediated pathway. Mediates the anti-inflammatory effects of omega-3 polyunsaturated fatty acids (PUFAs) via inhibition of NLRP3 inflammasome activation. This Mus musculus (Mouse) protein is Free fatty acid receptor 1 (Ffar1).